The following is a 285-amino-acid chain: uncharacterized protein (285 aa).

One can recognise an HTH araC/xylS-type domain in the interval 184–282 (HSICNWVQDN…GLTPGEYSAR (99 aa)). DNA-binding regions (H-T-H motif) lie at residues 201 to 222 (ESVA…AQHG) and 249 to 272 (IHEV…RRQF).

This is an uncharacterized protein from Escherichia coli (strain K12).